Here is a 184-residue protein sequence, read N- to C-terminus: Ribosome-recycling factor (184 aa).

It belongs to the RRF family.

It is found in the cytoplasm. In terms of biological role, responsible for the release of ribosomes from messenger RNA at the termination of protein biosynthesis. May increase the efficiency of translation by recycling ribosomes from one round of translation to another. This Desulfotalea psychrophila (strain LSv54 / DSM 12343) protein is Ribosome-recycling factor.